Reading from the N-terminus, the 590-residue chain is Peroxisomal targeting signal receptor (590 aa).

C6 participates in a covalent cross-link: Glycyl cysteine thioester (Cys-Gly) (interchain with G-Cter in ubiquitin). The amphipathic helix 1 (AH1) stretch occupies residues 7-29 (SVGSNPLAQLNKHAQGQGSSLSN). Residue K18 forms a Glycyl lysine isopeptide (Lys-Gly) (interchain with G-Cter in ubiquitin) linkage. The segment covering 18-30 (KHAQGQGSSLSNT) has biased composition (polar residues). Residues 18 to 45 (KHAQGQGSSLSNTHVRHSGGVSGSNVFR) form a disordered region. The interval 56-74 (RQQLNSFMSQPMRLGEDKM) is amphipathic helix 2 (AH2). 3 consecutive short sequence motifs (wxxxF/Y motif) follow at residues 108–112 (WTREF), 139–143 (WKFRY), and 178–182 (WNDKF). The interval 227 to 243 (FQEVWDSIQQDTEEMLS) is amphipathic helix 4 (AH4). TPR repeat units lie at residues 285–319 (NPNA…DPKH), 320–353 (VDAW…DPNN), 424–457 (PDIQ…NPND), 459–491 (LMWN…KPSF), and 493–525 (RARY…HDVE).

The protein belongs to the peroxisomal targeting signal receptor family. In terms of assembly, interacts (via WxxxF/Y and LVxEF motifs) with PEX14; promoting translocation through the PEX13-PEX14 docking complex. Monoubiquitinated at Cys-6 by PEX2 during PEX5 passage through the retrotranslocation channel: monoubiquitination acts as a signal for PEX5 extraction and is required for proper export from peroxisomes and recycling. When PEX5 recycling is compromised, polyubiquitinated at Lys-18 by PEX10 during its passage through the retrotranslocation channel, leading to its degradation.

The protein resides in the cytoplasm. It localises to the cytosol. It is found in the peroxisome matrix. Its function is as follows. Receptor that mediates peroxisomal import of proteins containing a C-terminal PTS1-type tripeptide peroxisomal targeting signal (SKL-type). Binds to cargo proteins containing a PTS1 peroxisomal targeting signal in the cytosol, and translocates them into the peroxisome matrix by passing through the PEX13-PEX14 docking complex along with cargo proteins. PEX5 receptor is then retrotranslocated into the cytosol, leading to release of bound cargo in the peroxisome matrix, and reset for a subsequent peroxisome import cycle. This Candida glabrata (strain ATCC 2001 / BCRC 20586 / JCM 3761 / NBRC 0622 / NRRL Y-65 / CBS 138) (Yeast) protein is Peroxisomal targeting signal receptor (PEX5).